A 696-amino-acid polypeptide reads, in one-letter code: Elongation factor G 2 (696 aa).

A tr-type G domain is found at 5 to 281 (SKYRNIGIFA…AVVDYLPSPT (277 aa)). GTP-binding positions include 14-21 (AHVDAGKT), 78-82 (DTPGH), and 132-135 (NKLD).

Belongs to the TRAFAC class translation factor GTPase superfamily. Classic translation factor GTPase family. EF-G/EF-2 subfamily.

The protein localises to the cytoplasm. Catalyzes the GTP-dependent ribosomal translocation step during translation elongation. During this step, the ribosome changes from the pre-translocational (PRE) to the post-translocational (POST) state as the newly formed A-site-bound peptidyl-tRNA and P-site-bound deacylated tRNA move to the P and E sites, respectively. Catalyzes the coordinated movement of the two tRNA molecules, the mRNA and conformational changes in the ribosome. This Vibrio parahaemolyticus serotype O3:K6 (strain RIMD 2210633) protein is Elongation factor G 2.